A 1161-amino-acid chain; its full sequence is PAN2-PAN3 deadenylation complex catalytic subunit pan2 (1161 aa).

WD repeat units lie at residues 20–59 (GLPT…RYTS), 102–145 (AHEE…DKLQ), and 276–315 (ANVS…HFNE). Residues 316 to 452 (MSKEVEFADV…GAKLNGEAED (137 aa)) are linker. One can recognise a USP domain in the interval 453 to 822 (DPLLKYSNVE…IPCVLAYQAR (370 aa)). The Exonuclease domain maps to 871 to 1049 (VALDTEFVDL…VEDARMALRL (179 aa)). Residues aspartate 874, glutamate 876, aspartate 983, and aspartate 1042 each contribute to the a divalent metal cation site. Residues 1094 to 1161 (GTAVTMQNNS…GDFFGGSPLK (68 aa)) are disordered. The span at 1097-1110 (VTMQNNSGRNTPST) shows a compositional bias: polar residues. Low complexity predominate over residues 1116–1129 (AAAAAATTSAPATP). Residues 1145–1155 (TFGGPGTGDFF) show a composition bias toward gly residues.

Belongs to the peptidase C19 family. PAN2 subfamily. As to quaternary structure, forms a heterotrimer with an asymmetric homodimer of the regulatory subunit pan3 to form the poly(A)-nuclease (PAN) deadenylation complex. The cofactor is a divalent metal cation.

It localises to the cytoplasm. The enzyme catalyses Exonucleolytic cleavage of poly(A) to 5'-AMP.. Its activity is regulated as follows. Positively regulated by the regulatory subunit pan3. Functionally, catalytic subunit of the poly(A)-nuclease (PAN) deadenylation complex, one of two cytoplasmic mRNA deadenylases involved in mRNA turnover. PAN specifically shortens poly(A) tails of RNA and the activity is stimulated by poly(A)-binding protein pab1. PAN deadenylation is followed by rapid degradation of the shortened mRNA tails by the CCR4-NOT complex. Deadenylated mRNAs are then degraded by two alternative mechanisms, namely exosome-mediated 3'-5' exonucleolytic degradation, or deadenylation-dependent mRNA decaping and subsequent 5'-3' exonucleolytic degradation by xrn1. May also be involved in post-transcriptional maturation of mRNA poly(A) tails. The polypeptide is PAN2-PAN3 deadenylation complex catalytic subunit pan2 (Aspergillus clavatus (strain ATCC 1007 / CBS 513.65 / DSM 816 / NCTC 3887 / NRRL 1 / QM 1276 / 107)).